The sequence spans 334 residues: Procathepsin L (334 aa).

An N-terminal signal peptide occupies residues 1-17 (MNLLLLLAVLCLGTALA). Residues 18-113 (TPKFDQTFSA…RLFQEPLMLK (96 aa)) constitute a propeptide, activation peptide. Glu122 lines the Zn(2+) pocket. Intrachain disulfides connect Cys135–Cys178 and Cys169–Cys211. Cys138 is a catalytic residue. The Zn(2+) site is built by Glu163, Asp184, Glu199, and Glu205. Asn221 carries N-linked (GlcNAc...) (high mannose) asparagine glycosylation. Positions 227, 250, 253, and 275 each coordinate Zn(2+). The cysteines at positions 269 and 322 are disulfide-linked. Residue His276 is part of the active site. A propeptide spanning residues 289–290 (DS) is cleaved from the precursor. The active site involves Asn300.

Belongs to the peptidase C1 family. In terms of assembly, dimer of a heavy and a light chain linked by disulfide bonds. Interacts with Long isoform of CD74/Ii chain; the interaction stabilizes the conformation of mature CTSL. During export along the endocytic pathway, pro-CTSL undergoes several proteolytic cleavages to generate the CTSL single-chain and two-chain mature forms, composed of a heavy chain linked to a light chain by disulfide bonds. Autocleavage; produces the single-chain CTSL after cleavage of the propeptide. The cleavage can be intermolecular. As to expression, expressed in thymus, kidney and liver. Expressed in thyroid epithelial cells. Expressed in cortical thymic epithelial cells. Expressed by antigen presenting cells (APCs) such as dendritic cells and macrophages.

It is found in the lysosome. The protein localises to the apical cell membrane. The protein resides in the secreted. Its subcellular location is the extracellular space. It localises to the cytoplasmic vesicle. It is found in the secretory vesicle. The protein localises to the chromaffin granule. The catalysed reaction is Specificity close to that of papain. As compared to cathepsin B, cathepsin L exhibits higher activity toward protein substrates, but has little activity on Z-Arg-Arg-NHMec, and no peptidyl-dipeptidase activity.. With respect to regulation, long isoform of CD74/Ii chain stabilizes the conformation of mature CTSL by binding to its active site and serving as a chaperone to help maintain a pool of mature enzyme in endocytic compartments and extracellular space of APCs. IFNG enhances the conversion into the CTSL mature and active form. Inhibited by CST6. Inhibited by the glycopeptide antibiotic teicoplanin. Inhibited by amantadine. Thiol protease important for the overall degradation of proteins in lysosomes. Involved in the solubilization of cross-linked TG/thyroglobulin and in the subsequent release of thyroid hormone thyroxine (T4) by limited proteolysis of TG/thyroglobulin in the thyroid follicle lumen. In neuroendocrine chromaffin cells secretory vesicles, catalyzes the prohormone proenkephalin processing to the active enkephalin peptide neurotransmitter. In thymus, regulates CD4(+) T cell positive selection by generating the major histocompatibility complex class II (MHCII) bound peptide ligands presented by cortical thymic epithelial cells. Also mediates invariant chain processing in cortical thymic epithelial cells. Major elastin-degrading enzyme at neutral pH. Accumulates as a mature and active enzyme in the extracellular space of antigen presenting cells (APCs) to regulate degradation of the extracellular matrix in the course of inflammation. Secreted form generates endostatin from COL18A1. Critical for cardiac morphology and function. Plays an important role in hair follicle morphogenesis and cycling, as well as epidermal differentiation. Required for maximal stimulation of steroidogenesis by TIMP1. This is Procathepsin L from Mus musculus (Mouse).